We begin with the raw amino-acid sequence, 383 residues long: uncharacterized protein (383 aa).

The chain crosses the membrane as a helical span at residues 6 to 26; sequence LFLFSCLYFIGGNLKALVLGI. In terms of domain architecture, ATP-grasp spans 131–303; sequence YKKLKNLGFN…LAMVLLNNKY (173 aa).

The protein localises to the membrane. This is an uncharacterized protein from Methanocaldococcus jannaschii (strain ATCC 43067 / DSM 2661 / JAL-1 / JCM 10045 / NBRC 100440) (Methanococcus jannaschii).